Consider the following 324-residue polypeptide: Formimidoylglutamase (324 aa).

Positions 124, 153, 155, 157, 245, and 247 each coordinate Mn(2+).

It belongs to the arginase family. The cofactor is Mn(2+).

It carries out the reaction N-formimidoyl-L-glutamate + H2O = formamide + L-glutamate. The protein operates within amino-acid degradation; L-histidine degradation into L-glutamate; L-glutamate from N-formimidoyl-L-glutamate (hydrolase route): step 1/1. Its function is as follows. Catalyzes the conversion of N-formimidoyl-L-glutamate to L-glutamate and formamide. This chain is Formimidoylglutamase, found in Hahella chejuensis (strain KCTC 2396).